Reading from the N-terminus, the 807-residue chain is Enhancer of polycomb homolog 2 (807 aa).

Residues lysine 135, lysine 195, lysine 324, and lysine 362 each participate in a glycyl lysine isopeptide (Lys-Gly) (interchain with G-Cter in SUMO2) cross-link. Positions aspartate 376 to glycine 396 are disordered. Phosphoserine is present on serine 538. The span at glutamine 600–glutamine 613 shows a compositional bias: low complexity. 2 disordered regions span residues glutamine 600–serine 628 and serine 645–glycine 673. Polar residues-rich tracts occupy residues threonine 614–serine 628 and glutamate 657–glycine 673. Position 754 is a phosphoserine (serine 754).

Belongs to the enhancer of polycomb family.

The protein localises to the nucleus. Functionally, may play a role in transcription or DNA repair. This chain is Enhancer of polycomb homolog 2 (EPC2), found in Homo sapiens (Human).